The sequence spans 144 residues: Large ribosomal subunit protein uL24 (144 aa).

The tract at residues 102-144 (NIVVEKPEPEPEPRKEETAEAQEAKEEAVAEEKTEVDDNDKQN) is disordered. Over residues 103 to 134 (IVVEKPEPEPEPRKEETAEAQEAKEEAVAEEK) the composition is skewed to basic and acidic residues. The span at 135–144 (TEVDDNDKQN) shows a compositional bias: acidic residues.

Belongs to the universal ribosomal protein uL24 family. As to quaternary structure, part of the 50S ribosomal subunit.

In terms of biological role, one of two assembly initiator proteins, it binds directly to the 5'-end of the 23S rRNA, where it nucleates assembly of the 50S subunit. Located at the polypeptide exit tunnel on the outside of the subunit. This Thermoplasma acidophilum (strain ATCC 25905 / DSM 1728 / JCM 9062 / NBRC 15155 / AMRC-C165) protein is Large ribosomal subunit protein uL24 (rpl24).